We begin with the raw amino-acid sequence, 723 residues long: Polyribonucleotide nucleotidyltransferase (723 aa).

2 residues coordinate Mg(2+): Asp-497 and Asp-503. Residues 564–623 (PRLLSFRIDPELIGTVIGPGGRTIKGITERTNTKIDIEDGGIVTIASHDGAAAEAAQRII) form the KH domain. Residues 633–701 (GEVFTGTITR…NRGRINLTLR (69 aa)) form the S1 motif domain. The segment at 701-723 (RGVPQNGEETQSEPAPTPVAPLN) is disordered.

The protein belongs to the polyribonucleotide nucleotidyltransferase family. The cofactor is Mg(2+).

It is found in the cytoplasm. It catalyses the reaction RNA(n+1) + phosphate = RNA(n) + a ribonucleoside 5'-diphosphate. Involved in mRNA degradation. Catalyzes the phosphorolysis of single-stranded polyribonucleotides processively in the 3'- to 5'-direction. The protein is Polyribonucleotide nucleotidyltransferase of Prochlorococcus marinus (strain MIT 9313).